The primary structure comprises 274 residues: Bis(5'-nucleosyl)-tetraphosphatase, symmetrical (274 aa).

The protein belongs to the Ap4A hydrolase family.

The catalysed reaction is P(1),P(4)-bis(5'-adenosyl) tetraphosphate + H2O = 2 ADP + 2 H(+). Functionally, hydrolyzes diadenosine 5',5'''-P1,P4-tetraphosphate to yield ADP. This is Bis(5'-nucleosyl)-tetraphosphatase, symmetrical from Shewanella baltica (strain OS223).